The sequence spans 134 residues: Putative capsid protein (134 aa).

Homodimer.

The protein localises to the virion. Functionally, self-assembles to form a helical, filamentous nucleocapsid. The capsid proteins wrap around the DNA and maintain it in an A-form by non-specific desolvation and specific coordination of the DNA phosphate groups by positively charged residues. This certainly protects the viral DNA under conditions such as the extreme desiccation of its host. In Sulfolobus islandicus rod-shaped virus 1 (SIRV-1), this protein is Putative capsid protein.